The following is a 204-amino-acid chain: Nascent polypeptide-associated complex subunit alpha-like protein 3 (204 aa).

Residues 1-23 (MTAEQKVELAAKLEEQKIDLDKP) are compositionally biased toward basic and acidic residues. 2 disordered regions span residues 1-68 (MTAE…AMLK) and 141-165 (GETSSAATAAAVQDDDDEEVDEEGV). The span at 24 to 43 (EVEDDDDNDEDDSEDDDEAE) shows a compositional bias: acidic residues. Residue Ser36 is modified to Phosphoserine. The segment covering 44–59 (GHDGEAGGRSKQSRSE) has biased composition (basic and acidic residues). The NAC-A/B domain maps to 56–121 (SRSEKKSRKA…AKIEDLSSQL (66 aa)). The segment covering 141 to 152 (GETSSAATAAAV) has biased composition (low complexity). The segment covering 153–164 (QDDDDEEVDEEG) has biased composition (acidic residues). Residues 159–204 (EVDEEGVEPKDIELVMTQAGVSKPRAVKALKLANGDIVSAIMELTT) enclose the UBA domain.

This sequence belongs to the NAC-alpha family.

May promote appropriate targeting of ribosome-nascent polypeptide complexes. The protein is Nascent polypeptide-associated complex subunit alpha-like protein 3 of Arabidopsis thaliana (Mouse-ear cress).